The chain runs to 266 residues: Type II pantothenate kinase (266 aa).

Residue 6-13 (DAGGTLIK) coordinates ATP. The Proton acceptor role is filled by E70. Residues T99, 121 to 125 (GGMIQ), Y137, and S225 each bind ATP.

The protein belongs to the type II pantothenate kinase family. Homodimer.

It localises to the cytoplasm. The enzyme catalyses (R)-pantothenate + ATP = (R)-4'-phosphopantothenate + ADP + H(+). It functions in the pathway cofactor biosynthesis; coenzyme A biosynthesis; CoA from (R)-pantothenate: step 1/5. Functionally, catalyzes the phosphorylation of pantothenate (Pan), the first step in CoA biosynthesis. The sequence is that of Type II pantothenate kinase from Staphylococcus haemolyticus (strain JCSC1435).